The chain runs to 191 residues: LHFPL tetraspan subfamily member 7 protein (191 aa).

A run of 4 helical transmembrane segments spans residues 6 to 26 (MGSL…FSLM), 72 to 92 (IAAV…VLVL), 112 to 132 (YAQI…PFNL), and 154 to 174 (LGWG…LPFI).

Belongs to the TMEM211 family.

The protein localises to the membrane. This Xenopus tropicalis (Western clawed frog) protein is LHFPL tetraspan subfamily member 7 protein (lhfpl7).